We begin with the raw amino-acid sequence, 270 residues long: 4-hydroxy-tetrahydrodipicolinate reductase (270 aa).

NAD(+) contacts are provided by residues 9 to 14 and glutamate 35; that span reads GAGGRM. Arginine 36 is an NADP(+) binding site. NAD(+)-binding positions include 99 to 101 and 123 to 126; these read GTT and ASNF. Residue histidine 156 is the Proton donor/acceptor of the active site. Histidine 157 provides a ligand contact to (S)-2,3,4,5-tetrahydrodipicolinate. The active-site Proton donor is the lysine 160. 166-167 lines the (S)-2,3,4,5-tetrahydrodipicolinate pocket; it reads GT.

The protein belongs to the DapB family.

It is found in the cytoplasm. The catalysed reaction is (S)-2,3,4,5-tetrahydrodipicolinate + NAD(+) + H2O = (2S,4S)-4-hydroxy-2,3,4,5-tetrahydrodipicolinate + NADH + H(+). The enzyme catalyses (S)-2,3,4,5-tetrahydrodipicolinate + NADP(+) + H2O = (2S,4S)-4-hydroxy-2,3,4,5-tetrahydrodipicolinate + NADPH + H(+). Its pathway is amino-acid biosynthesis; L-lysine biosynthesis via DAP pathway; (S)-tetrahydrodipicolinate from L-aspartate: step 4/4. In terms of biological role, catalyzes the conversion of 4-hydroxy-tetrahydrodipicolinate (HTPA) to tetrahydrodipicolinate. The protein is 4-hydroxy-tetrahydrodipicolinate reductase of Haemophilus influenzae (strain 86-028NP).